The sequence spans 259 residues: Ubiquitin-conjugating enzyme E2 J2 (259 aa).

At 1-226 (MSSTSSKRAP…AGLQQANRHH (226 aa)) the chain is on the cytoplasmic side. Residues 12–162 (TATQRLKQDY…DKVFCELFPE (151 aa)) form the UBC core domain. The active-site Glycyl thioester intermediate is Cys-94. A helical; Anchor for type IV membrane protein transmembrane segment spans residues 227–247 (GLLGGALANLFVIVGFAAFAY). Residues 248–259 (TVKYVLRSIAQE) lie on the Lumenal side of the membrane.

This sequence belongs to the ubiquitin-conjugating enzyme family. Auto-ubiquitinated.

Its subcellular location is the endoplasmic reticulum membrane. It carries out the reaction S-ubiquitinyl-[E1 ubiquitin-activating enzyme]-L-cysteine + [E2 ubiquitin-conjugating enzyme]-L-cysteine = [E1 ubiquitin-activating enzyme]-L-cysteine + S-ubiquitinyl-[E2 ubiquitin-conjugating enzyme]-L-cysteine.. Its pathway is protein modification; protein ubiquitination. Catalyzes the covalent attachment of ubiquitin to other proteins. Seems to function in the selective degradation of misfolded membrane proteins from the endoplasmic reticulum (ERAD). In cooperation with the GATOR2 complex, catalyzes 'Lys-6'-linked ubiquitination of NPRL2. This chain is Ubiquitin-conjugating enzyme E2 J2 (UBE2J2), found in Homo sapiens (Human).